Here is a 287-residue protein sequence, read N- to C-terminus: ATP synthase gamma chain (287 aa).

It belongs to the ATPase gamma chain family. In terms of assembly, F-type ATPases have 2 components, CF(1) - the catalytic core - and CF(0) - the membrane proton channel. CF(1) has five subunits: alpha(3), beta(3), gamma(1), delta(1), epsilon(1). CF(0) has three main subunits: a, b and c.

Its subcellular location is the cell membrane. Functionally, produces ATP from ADP in the presence of a proton gradient across the membrane. The gamma chain is believed to be important in regulating ATPase activity and the flow of protons through the CF(0) complex. In Brevibacillus brevis (strain 47 / JCM 6285 / NBRC 100599), this protein is ATP synthase gamma chain.